The primary structure comprises 325 residues: Delta(1)-pyrroline-2-carboxylate reductase (325 aa).

The protein belongs to the ornithine cyclodeaminase/mu-crystallin family.

It catalyses the reaction L-proline + NAD(+) = 1-pyrroline-2-carboxylate + NADH + H(+). It carries out the reaction L-proline + NADP(+) = 1-pyrroline-2-carboxylate + NADPH + H(+). In terms of biological role, catalyzes the reduction of Delta(1)-pyrroline-2-carboxylate (Pyr2C) to L-proline, using preferentially NADPH over NADH as the electron donor. Is likely involved in a degradation pathway that converts trans-3-hydroxy-L-proline (t3LHyp) to L-proline. The chain is Delta(1)-pyrroline-2-carboxylate reductase from Bacillus thuringiensis subsp. konkukian (strain 97-27).